The sequence spans 861 residues: Nuclear pore complex protein NUP93A (861 aa).

This sequence belongs to the nucleoporin interacting component (NIC) family. Part of the nuclear pore complex (NPC). The NPC has an eight-fold symmetrical structure comprising a central transport channel and two rings, the cytoplasmic and nuclear rings, to which eight filaments are attached. The cytoplasmic filaments have loose ends, while the nuclear filaments are joined in a distal ring, forming a nuclear basket. NPCs are highly dynamic in configuration and composition, and can be devided in 3 subcomplexes, the NUP62 subcomplex, the NUP107-160 subcomplex and the NUP93 subcomplex, containing approximately 30 different nucleoporin proteins.

The protein localises to the nucleus envelope. It localises to the nucleus. The protein resides in the nuclear pore complex. In Arabidopsis thaliana (Mouse-ear cress), this protein is Nuclear pore complex protein NUP93A.